The chain runs to 135 residues: uncharacterized protein (135 aa).

Residues 1–36 form a disordered region; that stretch reads MSHAEKPMSDSVNHHHHRTFEVLTAEPVRSRRKPRH.

It belongs to the transposase 8 family.

This is an uncharacterized protein from Sinorhizobium fredii (strain NBRC 101917 / NGR234).